The primary structure comprises 2661 residues: 3-methylorcinaldehyde synthase tropA (2661 aa).

Residues 14–271 form an N-terminal acylcarrier protein transacylase domain (SAT) region; that stretch reads LLFGSQSLSF…HWSGHEAEVD (258 aa). One can recognise a Ketosynthase family 3 (KS3) domain in the interval 380-796; that stretch reads GDDIAIVGAS…GSNASMVITQ (417 aa). Residues cysteine 545, histidine 680, and histidine 719 each act as for beta-ketoacyl synthase activity in the active site. The segment at 901–1211 is malonyl-CoA:ACP transacylase (MAT) domain; it reads LCFGGQVSTF…QAMSITTDKG (311 aa). The active-site For acyl/malonyl transferase activity is serine 988. Residues 1283–1425 are N-terminal hotdog fold; that stretch reads PDTILSFVGY…GTLVVVPMED (143 aa). A PKS/mFAS DH domain is found at 1283–1600; sequence PDTILSFVGY…FVRIPRKGLA (318 aa). Residues 1288–1599 are product template (PT) domain; sequence SFVGYQDSNK…QFVRIPRKGL (312 aa). Histidine 1318 serves as the catalytic Proton acceptor; for dehydratase activity. Residues 1453–1600 are C-terminal hotdog fold; it reads AEEILQGRTI…FVRIPRKGLA (148 aa). The active-site Proton donor; for dehydratase activity is aspartate 1509. The interval 1614–1656 is disordered; sequence ATNAQSRAIPPPSTNTTQSSSQQTPIPKAAAPKKEKKRPGNPK. Residues 1627–1643 show a composition bias toward low complexity; the sequence is TNTTQSSSQQTPIPKAA. The region spanning 1654–1731 is the Carrier 1 domain; the sequence is NPKLDVLPKL…QLVRVVESIV (78 aa). Position 1691 is an O-(pantetheine 4'-phosphoryl)serine (serine 1691). The disordered stretch occupies residues 1734-1762; that stretch reads EGSETSNLSSDDDDENGTPSTPETDLSDA. The region spanning 1764–1841 is the Carrier 2 domain; it reads VDAVVDNAEL…DLRQTAPGAA (78 aa). At serine 1801 the chain carries O-(pantetheine 4'-phosphoryl)serine. The interval 1998–2231 is methyltransferase (CMeT) domain; sequence QYQNVNELIF…GFGRVDWSDG (234 aa). The interval 2271–2659 is thioesterase (TE) domain; it reads GVDLLSPAIR…FISYWRSISF (389 aa).

Its pathway is secondary metabolite biosynthesis. Functionally, non-reducing polyketide synthase; part of the gene cluster that mediates the biosynthesis of the tropolone class of fungal maleic anhydrides. The pathway begins with the synthesis of 3-methylorcinaldehyde by the non-reducing polyketide synthase (PKS) tropA. 3-methylorcinaldehyde is the substrate for the FAD-dependent monooxygenase tropB to yield a dearomatized hydroxycyclohexadione. The 2-oxoglutarate-dependent dioxygenase tropC then performs the oxidative ring expansion to provide the first tropolone metabolite stipitaldehyde. Trop D converts stipitaldehyde into stipitacetal which is in turn converted to stipitalide by the short-chain dehydrogenase/reductase tropE. The next steps involve tropF, tropG, tropH, tropI and tropJ to form successive tropolone maleic anhydrides including stipitaldehydic, stipitatonic and stipitatic acids. This chain is 3-methylorcinaldehyde synthase tropA, found in Talaromyces stipitatus (strain ATCC 10500 / CBS 375.48 / QM 6759 / NRRL 1006) (Penicillium stipitatum).